Reading from the N-terminus, the 108-residue chain is MEKKIDEIDFEKAGGIVPVIVQDNNTHEVLTLAYSNRESLELTRKTGLSWFWSRSRSKLWQKGEESGNTQQVKKILVDCDQDALIYLVEPSGPACHTGERNCFHHSLL.

Position 78 (Asp78) interacts with Mg(2+). Position 79 (Cys79) interacts with Zn(2+). Mg(2+) contacts are provided by Asp80 and Asp82. Cys95 and Cys102 together coordinate Zn(2+).

This sequence belongs to the PRA-CH family. Homodimer. Requires Mg(2+) as cofactor. The cofactor is Zn(2+).

It localises to the cytoplasm. The catalysed reaction is 1-(5-phospho-beta-D-ribosyl)-5'-AMP + H2O = 1-(5-phospho-beta-D-ribosyl)-5-[(5-phospho-beta-D-ribosylamino)methylideneamino]imidazole-4-carboxamide. Its pathway is amino-acid biosynthesis; L-histidine biosynthesis; L-histidine from 5-phospho-alpha-D-ribose 1-diphosphate: step 3/9. Functionally, catalyzes the hydrolysis of the adenine ring of phosphoribosyl-AMP. This is Phosphoribosyl-AMP cyclohydrolase from Cenarchaeum symbiosum (strain A).